We begin with the raw amino-acid sequence, 309 residues long: 4-hydroxy-3-methylbut-2-enyl diphosphate reductase (309 aa).

Residue Cys12 participates in [4Fe-4S] cluster binding. His43 and His77 together coordinate (2E)-4-hydroxy-3-methylbut-2-enyl diphosphate. 2 residues coordinate dimethylallyl diphosphate: His43 and His77. Positions 43 and 77 each coordinate isopentenyl diphosphate. Position 99 (Cys99) interacts with [4Fe-4S] cluster. His127 lines the (2E)-4-hydroxy-3-methylbut-2-enyl diphosphate pocket. His127 serves as a coordination point for dimethylallyl diphosphate. Residue His127 participates in isopentenyl diphosphate binding. Glu129 acts as the Proton donor in catalysis. Thr167 provides a ligand contact to (2E)-4-hydroxy-3-methylbut-2-enyl diphosphate. Position 197 (Cys197) interacts with [4Fe-4S] cluster. Residues Ser225, Ser226, Asn227, and Ser269 each contribute to the (2E)-4-hydroxy-3-methylbut-2-enyl diphosphate site. 4 residues coordinate dimethylallyl diphosphate: Ser225, Ser226, Asn227, and Ser269. The isopentenyl diphosphate site is built by Ser225, Ser226, Asn227, and Ser269.

This sequence belongs to the IspH family. Requires [4Fe-4S] cluster as cofactor.

It catalyses the reaction isopentenyl diphosphate + 2 oxidized [2Fe-2S]-[ferredoxin] + H2O = (2E)-4-hydroxy-3-methylbut-2-enyl diphosphate + 2 reduced [2Fe-2S]-[ferredoxin] + 2 H(+). The catalysed reaction is dimethylallyl diphosphate + 2 oxidized [2Fe-2S]-[ferredoxin] + H2O = (2E)-4-hydroxy-3-methylbut-2-enyl diphosphate + 2 reduced [2Fe-2S]-[ferredoxin] + 2 H(+). Its pathway is isoprenoid biosynthesis; dimethylallyl diphosphate biosynthesis; dimethylallyl diphosphate from (2E)-4-hydroxy-3-methylbutenyl diphosphate: step 1/1. It participates in isoprenoid biosynthesis; isopentenyl diphosphate biosynthesis via DXP pathway; isopentenyl diphosphate from 1-deoxy-D-xylulose 5-phosphate: step 6/6. Functionally, catalyzes the conversion of 1-hydroxy-2-methyl-2-(E)-butenyl 4-diphosphate (HMBPP) into a mixture of isopentenyl diphosphate (IPP) and dimethylallyl diphosphate (DMAPP). Acts in the terminal step of the DOXP/MEP pathway for isoprenoid precursor biosynthesis. The protein is 4-hydroxy-3-methylbut-2-enyl diphosphate reductase of Wolbachia sp. subsp. Brugia malayi (strain TRS).